We begin with the raw amino-acid sequence, 215 residues long: MPGTLGFRELGQMAYEPVWQAMQRFTNERGTTAPDEIWLVEHPPVFTQGQAGKAEHLLLPGDIPVVQVDRGGQVTYHGPGQLVAYLLLDVRRLGFGVRDLVSRMERCLIELLASYGVTAVAKPDAPGVYIDGAKIASLGLRIRHGCSFHGLALNVDMNLEPFRRINPCGYAGLAMTQLSEHAGSIEFAEVSARLRAQLVKHLDYAEQTTLTGGID.

One can recognise a BPL/LPL catalytic domain in the interval 31–206 (TTAPDEIWLV…QLVKHLDYAE (176 aa)). Substrate contacts are provided by residues 70–77 (RGGQVTYH), 137–139 (SLG), and 150–152 (GLA). Residue cysteine 168 is the Acyl-thioester intermediate of the active site.

Belongs to the LipB family.

The protein resides in the cytoplasm. It carries out the reaction octanoyl-[ACP] + L-lysyl-[protein] = N(6)-octanoyl-L-lysyl-[protein] + holo-[ACP] + H(+). It participates in protein modification; protein lipoylation via endogenous pathway; protein N(6)-(lipoyl)lysine from octanoyl-[acyl-carrier-protein]: step 1/2. Catalyzes the transfer of endogenously produced octanoic acid from octanoyl-acyl-carrier-protein onto the lipoyl domains of lipoate-dependent enzymes. Lipoyl-ACP can also act as a substrate although octanoyl-ACP is likely to be the physiological substrate. The polypeptide is Octanoyltransferase (Pseudomonas fluorescens (strain Pf0-1)).